The sequence spans 907 residues: Translation initiation factor IF-2 (907 aa).

3 stretches are compositionally biased toward basic and acidic residues: residues 223–235, 251–263, and 270–281; these read LAQRRQEEAKRAA, VAKEAPKPEEKNA, and GGKDWNDSDGKK. The disordered stretch occupies residues 223-320; the sequence is LAQRRQEEAK…ENQQHAFTAP (98 aa). Positions 407–576 constitute a tr-type G domain; sequence PRPPVVTVMG…LLQAEVLELK (170 aa). The segment at 416 to 423 is G1; sequence GHVDHGKT. GTP is bound at residue 416–423; sequence GHVDHGKT. A G2 region spans residues 441-445; the sequence is GITQH. The G3 stretch occupies residues 462–465; the sequence is DTPG. GTP is bound by residues 462 to 466 and 516 to 519; these read DTPGH and NKID. A G4 region spans residues 516 to 519; sequence NKID. A G5 region spans residues 552-554; the sequence is SAK.

The protein belongs to the TRAFAC class translation factor GTPase superfamily. Classic translation factor GTPase family. IF-2 subfamily.

Its subcellular location is the cytoplasm. In terms of biological role, one of the essential components for the initiation of protein synthesis. Protects formylmethionyl-tRNA from spontaneous hydrolysis and promotes its binding to the 30S ribosomal subunits. Also involved in the hydrolysis of GTP during the formation of the 70S ribosomal complex. The chain is Translation initiation factor IF-2 from Methylobacillus flagellatus (strain ATCC 51484 / DSM 6875 / VKM B-1610 / KT).